The chain runs to 232 residues: Putative membrane protein ORF8 (232 aa).

Residues 71 to 84 are compositionally biased toward low complexity; sequence GSSAASIPSAPTPD. The tract at residues 71 to 121 is disordered; the sequence is GSSAASIPSAPTPDATRESPTGEPHRDRALSTETPTPEPSRDGGSTPEVLH. Helical transmembrane passes span 166–182 and 195–211; these read VFAR…GSVA and LVVT…WVIV.

It localises to the membrane. This chain is Putative membrane protein ORF8 (ORF8), found in Ictalurid herpesvirus 1 (strain Auburn) (IcHV-1).